A 449-amino-acid polypeptide reads, in one-letter code: UNC93-like protein MFSD11 (449 aa).

Residues 8-28 traverse the membrane as a helical segment; that stretch reads LFNIIILGVAFMFMFTAFQTC. Asparagine 40 carries an N-linked (GlcNAc...) asparagine glycan. A run of 5 helical transmembrane segments spans residues 53–73, 74–94, 96–116, 138–158, and 170–190; these read AIIY…VAIV, GPQL…AVFN, PFPW…AVLW, IFWA…YFAW, and RTVF…FFLI. Residue serine 204 is modified to Phosphoserine. The next 6 helical transmembrane spans lie at 239-259, 277-297, 309-329, 359-379, 385-405, and 410-430; these read MLLL…FSGV, LIGL…SLFG, PVVL…FLNM, FLLG…LGFL, APAF…AFFY, and LLHW…LSFF.

The protein belongs to the unc-93 family.

It localises to the membrane. This chain is UNC93-like protein MFSD11 (MFSD11), found in Pongo abelii (Sumatran orangutan).